We begin with the raw amino-acid sequence, 604 residues long: MRPDISNIPELPGVYLMKDISDNIIYIGKAKSLKKRVSQYFQSSKNHSSKTRAMVRKIADVDYIVTESEVAALILEANLVKKNRPHYNIDLKDDKRYPYVKVTVNTKFPKIFITRRRLMDGALYFGPYTNVKPVRQTLDMISQIFRIKRCNRRVDGKGKRACLNYHIDRCYAPCNGSITPEEYRNNVMEAVKLFKGETSGTIKELQEKMNIHAIAQEYESAAVIRDQIDALKSLSRQQTATAGNDDSDIIATASDDETVFVQIFYIRDGNMVGKADMSLSWGDATGNIARVTEEFIKQYYQDAPVPPEILVQYPIPEKELVIKWLSEKAARSVQIQVPQRGNKKRLMEMAEQNAQMTLEQSHLKQSDKEQALQALLQLRDALALSTLPAHIEGFDISNISGTDAVGSMVVFENGLPANSKYRHFNIKTVKGIDDFAMMAEVVKRRYTHQKAEKDKLPDLILIDGGPGQVSAAMGSLKELQLDIPLVGLAKRFEHIIVPKDGTDEVVILPHTSEALKVLMRVRDESHRFAVSSHRRRRTARLSHSELDTIPGIGASRKKALLNHFSSIEQIRHASVEELTAVEGISKGLAERIVAHFNKERVENQ.

The 80-residue stretch at 10 to 89 folds into the GIY-YIG domain; it reads ELPGVYLMKD…VKKNRPHYNI (80 aa). Residues 199–234 enclose the UVR domain; it reads SGTIKELQEKMNIHAIAQEYESAAVIRDQIDALKSL.

Belongs to the UvrC family. Interacts with UvrB in an incision complex.

It is found in the cytoplasm. In terms of biological role, the UvrABC repair system catalyzes the recognition and processing of DNA lesions. UvrC both incises the 5' and 3' sides of the lesion. The N-terminal half is responsible for the 3' incision and the C-terminal half is responsible for the 5' incision. This chain is UvrABC system protein C, found in Methanococcoides burtonii (strain DSM 6242 / NBRC 107633 / OCM 468 / ACE-M).